A 40-amino-acid chain; its full sequence is MPCPCGSGCKCASQATKGSCNCGSDCKCGGDKKSACGCSE.

The protein belongs to the metallothionein superfamily. Type 5 family.

In terms of biological role, this protein binds cations of several transition elements. It is thought to be involved in detoxification processes. The chain is Metallothionein-1 (MtnA) from Drosophila melanogaster (Fruit fly).